A 271-amino-acid chain; its full sequence is Urease accessory protein UreD (271 aa).

It belongs to the UreD family. In terms of assembly, ureD, UreF and UreG form a complex that acts as a GTP-hydrolysis-dependent molecular chaperone, activating the urease apoprotein by helping to assemble the nickel containing metallocenter of UreC. The UreE protein probably delivers the nickel.

The protein resides in the cytoplasm. Required for maturation of urease via the functional incorporation of the urease nickel metallocenter. This Actinomyces naeslundii protein is Urease accessory protein UreD.